We begin with the raw amino-acid sequence, 60 residues long: uncharacterized protein (60 aa).

A helical transmembrane segment spans residues 33 to 55; sequence FRLLRGIFLITLVIWTVVWLKLL.

The protein belongs to the HHV-5 UL2 protein family.

The protein resides in the host membrane. This is an uncharacterized protein from Human cytomegalovirus (strain AD169) (HHV-5).